The following is a 161-amino-acid chain: Lipid droplet assembly factor 1 (161 aa).

Residues 1 to 43 (MAKEEPQSISRDLQELQKKLSLLIDSFQNNSKVVAFMKSPVGQ) lie on the Cytoplasmic side of the membrane. The helical transmembrane segment at 44 to 61 (YLDSHPFLAFTLLVFIVM) threads the bilayer. Over 62–67 (SAVPVG) the chain is Lumenal. Residues 68 to 87 (FFLLIVVLTTLAALLGVIIL) traverse the membrane as a helical segment. The Cytoplasmic segment spans residues 88–93 (EGLVIS). The chain crosses the membrane as a helical span at residues 94 to 110 (VGGFSLLCILCGLGFVS). Over 111–116 (LAMSGM) the chain is Lumenal. A helical transmembrane segment spans residues 117–133 (MIASYVVVSSLISCWFS). At 134-161 (PRPLTQQNTSCDFLPAMKSAEFEGLYQE) the chain is on the cytoplasmic side.

Belongs to the LDAF1 family. As to quaternary structure, interacts with isoform 1 and isoform 3 of BSCL2/seipin to form an oligomeric complex. As to expression, expressed at high levels in the heart and skeletal muscle. Expressed at low levels in kidney, small intestine, lung and liver.

Its subcellular location is the endoplasmic reticulum membrane. The protein resides in the lipid droplet. In terms of biological role, plays an important role in the formation of lipid droplets (LD) which are storage organelles at the center of lipid and energy homeostasis. In association with BSCL2/seipin, defines the sites of LD formation in the endoplasmic reticulum. In Homo sapiens (Human), this protein is Lipid droplet assembly factor 1.